Consider the following 513-residue polypeptide: Solute carrier family 2, facilitated glucose transporter member 7 (513 aa).

Over 1 to 21 (MEDKEIGTPLPLPHSEARLQP) the chain is Cytoplasmic. Residues 22–42 (TLVLTTLSAAFGSVFQYGYNI) traverse the membrane as a helical segment. The Extracellular segment spans residues 43–78 (AVINTPHKVFKSFYNDTHFERHGTFMDESTLLLLWS). The N-linked (GlcNAc...) asparagine glycan is linked to N57. Residues 79–99 (CTVSMFPLGGLLGSLVVGLMV) form a helical membrane-spanning segment. The Cytoplasmic portion of the chain corresponds to 100 to 107 (NKWGRKGT). A helical membrane pass occupies residues 108-128 (LLINNVFAITSAVLMGVSKVA). The Extracellular portion of the chain corresponds to 129–138 (RAFELIILSR). A helical transmembrane segment spans residues 139–159 (VLVGICAGIAYSTLPMYLGEL). Residues 160–172 (APQNLRGALGTMT) lie on the Cytoplasmic side of the membrane. The chain crosses the membrane as a helical span at residues 173-193 (EVFVIIGVLLAQIFSLQAILG). Topologically, residues 194 to 198 (NATGW) are extracellular. The helical transmembrane segment at 199 to 219 (PILLALTGVPAVIQLLSLPFF) threads the bilayer. The Cytoplasmic segment spans residues 220–282 (PESPRYTLIE…LNLFTFRPLR (63 aa)). The chain crosses the membrane as a helical span at residues 283 to 303 (WQLISIVVLMAGQQLSGINAV). D-glucose-binding positions include 295–296 (QQ) and N301. At 304–322 (NYYADVIYTSAGVDPTQSQ) the chain is on the extracellular side. Residues 323-343 (YVTLGSGVINLVMTLVSAVII) form a helical membrane-spanning segment. N332 is a binding site for D-glucose. At 344–351 (ERLGRRIL) the chain is on the cytoplasmic side. The helical transmembrane segment at 352-372 (LLSGYAICCSACLVLTVALLL) threads the bilayer. The Extracellular portion of the chain corresponds to 373-380 (QSTAPELS). A helical membrane pass occupies residues 381 to 401 (YLSIVCVFSYIVGHSIGPSPV). The Cytoplasmic portion of the chain corresponds to 402 to 416 (PSVVRTEIVLQSSRT). A helical transmembrane segment spans residues 417 to 437 (AAFTVDGAVHWLTNFIVGLTF). The Extracellular portion of the chain corresponds to 438–446 (PSIQVAIGA). The chain crosses the membrane as a helical span at residues 447 to 467 (YSFLVFAGVCILTAAYIYVVI). Over 468-513 (PETKGRTFVEINCAFAKRNGVEFPEEKEVATAKPHTPSLPTKETAF) the chain is Cytoplasmic. Positions 494-513 (KEVATAKPHTPSLPTKETAF) are disordered.

It belongs to the major facilitator superfamily. Sugar transporter (TC 2.A.1.1) family. Glucose transporter subfamily.

Its subcellular location is the cell membrane. It localises to the apical cell membrane. The catalysed reaction is D-glucose(out) = D-glucose(in). It carries out the reaction D-fructose(out) = D-fructose(in). Probable sugar transporter. Even if its physiological substrate is subject to discussion, it is able to transport glucose and fructose. Does not transport galactose, 2-deoxy-d-glucose and xylose. The sequence is that of Solute carrier family 2, facilitated glucose transporter member 7 from Mus musculus (Mouse).